The sequence spans 1128 residues: DNA-directed RNA polymerase subunit Rpo2 (1128 aa).

DsDNA-binding positions include Lys-178, Ser-181–Asn-182, Lys-206, Arg-435–Asn-439, and Arg-1027–Glu-1032. Cys-1061, Cys-1064, Cys-1079, and His-1082 together coordinate Zn(2+).

The protein belongs to the RNA polymerase beta chain family. As to quaternary structure, part of the 13-subunit RNA polymerase complex. It depends on Zn(2+) as a cofactor.

It is found in the cytoplasm. It catalyses the reaction RNA(n) + a ribonucleoside 5'-triphosphate = RNA(n+1) + diphosphate. Its function is as follows. DNA-dependent RNA polymerase (RNAP) catalyzes the transcription of DNA into RNA using the four ribonucleoside triphosphates as substrates. This subunit is involved in DNA promoter recognition. This is DNA-directed RNA polymerase subunit Rpo2 from Saccharolobus shibatae (strain ATCC 51178 / DSM 5389 / JCM 8931 / NBRC 15437 / B12) (Sulfolobus shibatae).